Here is a 159-residue protein sequence, read N- to C-terminus: ATP synthase subunit b (159 aa).

A helical transmembrane segment spans residues 2–22; it reads NISIPQIIAAILNFIILLLIV.

This sequence belongs to the ATPase B chain family. As to quaternary structure, F-type ATPases have 2 components, F(1) - the catalytic core - and F(0) - the membrane proton channel. F(1) has five subunits: alpha(3), beta(3), gamma(1), delta(1), epsilon(1). F(0) has three main subunits: a(1), b(2) and c(10-14). The alpha and beta chains form an alternating ring which encloses part of the gamma chain. F(1) is attached to F(0) by a central stalk formed by the gamma and epsilon chains, while a peripheral stalk is formed by the delta and b chains.

The protein localises to the cell membrane. F(1)F(0) ATP synthase produces ATP from ADP in the presence of a proton or sodium gradient. F-type ATPases consist of two structural domains, F(1) containing the extramembraneous catalytic core and F(0) containing the membrane proton channel, linked together by a central stalk and a peripheral stalk. During catalysis, ATP synthesis in the catalytic domain of F(1) is coupled via a rotary mechanism of the central stalk subunits to proton translocation. Its function is as follows. Component of the F(0) channel, it forms part of the peripheral stalk, linking F(1) to F(0). This Clostridium botulinum (strain Loch Maree / Type A3) protein is ATP synthase subunit b.